We begin with the raw amino-acid sequence, 178 residues long: Large ribosomal subunit protein uL6 (178 aa).

This sequence belongs to the universal ribosomal protein uL6 family. In terms of assembly, part of the 50S ribosomal subunit.

This protein binds to the 23S rRNA, and is important in its secondary structure. It is located near the subunit interface in the base of the L7/L12 stalk, and near the tRNA binding site of the peptidyltransferase center. The sequence is that of Large ribosomal subunit protein uL6 from Helicobacter pylori (strain Shi470).